The following is a 689-amino-acid chain: Beta-adrenergic receptor kinase 1 (689 aa).

Positions 1–190 are N-terminal; it reads MADLEAVLAD…ELNIHLTMND (190 aa). An RGS domain is found at 54 to 175; sequence TFEKIFSQKL…IESDKFTRFC (122 aa). Residues 191–453 form the Protein kinase domain; that stretch reads FSVHRIIGRG…AQEVKESPFF (263 aa). Residues 197–205 and Lys-220 each bind ATP; that span reads IGRGGFGEV. The active-site Proton acceptor is the Asp-317. Residues 454-521 form the AGC-kinase C-terminal domain; that stretch reads RSLDWQMVFL…TISERWQQEV (68 aa). One can recognise a PH domain in the interval 558-652; it reads DCIMHGYMSK…WKKELRDAYR (95 aa). Phosphoserine is present on Ser-670.

This sequence belongs to the protein kinase superfamily. AGC Ser/Thr protein kinase family. GPRK subfamily. As to quaternary structure, interacts with the heterodimer formed by GNB1 and GNG2. Interacts with GIT1. Interacts with, and phosphorylates chemokine-stimulated CCR5. Interacts with ARRB1. Interacts with LPAR1 and LPAR2. Interacts with RALA in response to LPAR1 activation. ADRBK1 and RALA mutually inhibit each other's binding to LPAR1. Interacts with ADRB2.

The protein localises to the cytoplasm. It is found in the cell membrane. The protein resides in the postsynapse. Its subcellular location is the presynapse. It carries out the reaction [beta-adrenergic receptor] + ATP = [beta-adrenergic receptor]-phosphate + ADP + H(+). Its activity is regulated as follows. In contrast to other AGC family kinases, the catalytic activity is solely regulated by the binding of substrates and ligands, not by phosphorylation of the kinase domain. Functionally, specifically phosphorylates the agonist-occupied form of the beta-adrenergic and closely related receptors, probably inducing a desensitization of them. Key regulator of LPAR1 signaling. Competes with RALA for binding to LPAR1 thus affecting the signaling properties of the receptor. Desensitizes LPAR1 and LPAR2 in a phosphorylation-independent manner. Positively regulates ciliary smoothened (SMO)-dependent Hedgehog (Hh) signaling pathway by facilitating the trafficking of SMO into the cilium and the stimulation of SMO activity. Inhibits relaxation of airway smooth muscle in response to blue light. The protein is Beta-adrenergic receptor kinase 1 of Mesocricetus auratus (Golden hamster).